We begin with the raw amino-acid sequence, 757 residues long: 5-methyltetrahydropteroyltriglutamate--homocysteine methyltransferase (757 aa).

Residues 16 to 19 (RELK) and lysine 112 contribute to the 5-methyltetrahydropteroyltri-L-glutamate site. L-homocysteine contacts are provided by residues 433-435 (IGS) and glutamate 486. L-methionine-binding positions include 433 to 435 (IGS) and glutamate 486. Residues 517 to 518 (RC) and tryptophan 563 contribute to the 5-methyltetrahydropteroyltri-L-glutamate site. Aspartate 601 serves as a coordination point for L-homocysteine. Aspartate 601 serves as a coordination point for L-methionine. Glutamate 607 contributes to the 5-methyltetrahydropteroyltri-L-glutamate binding site. Residues histidine 643, cysteine 645, and glutamate 667 each coordinate Zn(2+). The active-site Proton donor is the histidine 696. Residue cysteine 728 coordinates Zn(2+).

It belongs to the vitamin-B12 independent methionine synthase family. Zn(2+) is required as a cofactor.

The enzyme catalyses 5-methyltetrahydropteroyltri-L-glutamate + L-homocysteine = tetrahydropteroyltri-L-glutamate + L-methionine. Its pathway is amino-acid biosynthesis; L-methionine biosynthesis via de novo pathway; L-methionine from L-homocysteine (MetE route): step 1/1. In terms of biological role, catalyzes the transfer of a methyl group from 5-methyltetrahydrofolate to homocysteine resulting in methionine formation. This Histophilus somni (strain 2336) (Haemophilus somnus) protein is 5-methyltetrahydropteroyltriglutamate--homocysteine methyltransferase.